A 179-amino-acid chain; its full sequence is Large ribosomal subunit protein uL5 (179 aa).

This sequence belongs to the universal ribosomal protein uL5 family. Part of the 50S ribosomal subunit; part of the 5S rRNA/L5/L18/L25 subcomplex. Contacts the 5S rRNA and the P site tRNA. Forms a bridge to the 30S subunit in the 70S ribosome.

This is one of the proteins that bind and probably mediate the attachment of the 5S RNA into the large ribosomal subunit, where it forms part of the central protuberance. In the 70S ribosome it contacts protein S13 of the 30S subunit (bridge B1b), connecting the 2 subunits; this bridge is implicated in subunit movement. Contacts the P site tRNA; the 5S rRNA and some of its associated proteins might help stabilize positioning of ribosome-bound tRNAs. The chain is Large ribosomal subunit protein uL5 from Staphylococcus saprophyticus subsp. saprophyticus (strain ATCC 15305 / DSM 20229 / NCIMB 8711 / NCTC 7292 / S-41).